Here is a 501-residue protein sequence, read N- to C-terminus: Betaine aldehyde dehydrogenase, chloroplastic (501 aa).

The transit peptide at 1–7 (MAIRVPS) directs the protein to the chloroplast. 238 to 243 (GSTATG) provides a ligand contact to NAD(+). Glu-260 (proton acceptor) is an active-site residue. Residue Cys-294 is the Nucleophile of the active site.

This sequence belongs to the aldehyde dehydrogenase family. Homodimer.

It is found in the plastid. The protein localises to the chloroplast. The enzyme catalyses betaine aldehyde + NAD(+) + H2O = glycine betaine + NADH + 2 H(+). The protein operates within amine and polyamine biosynthesis; betaine biosynthesis via choline pathway; betaine from betaine aldehyde: step 1/1. The polypeptide is Betaine aldehyde dehydrogenase, chloroplastic (BADH4) (Amaranthus hypochondriacus (Prince-of-Wales feather)).